A 360-amino-acid polypeptide reads, in one-letter code: Photosystem II protein D1 (360 aa).

The next 3 membrane-spanning stretches (helical) occupy residues 29–46 (YIGW…TATS), 118–133 (HFLL…EWEL), and 142–156 (WIFV…AASA). Histidine 118 is a binding site for chlorophyll a. Residue tyrosine 126 participates in pheophytin a binding. Aspartate 170 and glutamate 189 together coordinate [CaMn4O5] cluster. A helical transmembrane segment spans residues 197–218 (FHMAGVAGVFGGSLFSAMHGSL). Histidine 198 is a chlorophyll a binding site. Residues histidine 215 and 264–265 (SF) contribute to the a quinone site. Fe cation is bound at residue histidine 215. Histidine 272 lines the Fe cation pocket. A helical transmembrane segment spans residues 274-288 (FLAAWPVVGIWLTAM). Positions 332, 333, 342, and 344 each coordinate [CaMn4O5] cluster. A propeptide spanning residues 345 to 360 (SGDVLPVALNAPAVNG) is cleaved from the precursor.

It belongs to the reaction center PufL/M/PsbA/D family. As to quaternary structure, PSII is composed of 1 copy each of membrane proteins PsbA, PsbB, PsbC, PsbD, PsbE, PsbF, PsbH, PsbI, PsbJ, PsbK, PsbL, PsbM, PsbT, PsbX, PsbY, PsbZ, Psb30/Ycf12, at least 3 peripheral proteins of the oxygen-evolving complex and a large number of cofactors. It forms dimeric complexes. It depends on The D1/D2 heterodimer binds P680, chlorophylls that are the primary electron donor of PSII, and subsequent electron acceptors. It shares a non-heme iron and each subunit binds pheophytin, quinone, additional chlorophylls, carotenoids and lipids. D1 provides most of the ligands for the Mn4-Ca-O5 cluster of the oxygen-evolving complex (OEC). There is also a Cl(-1) ion associated with D1 and D2, which is required for oxygen evolution. The PSII complex binds additional chlorophylls, carotenoids and specific lipids. as a cofactor. In terms of processing, tyr-161 forms a radical intermediate that is referred to as redox-active TyrZ, YZ or Y-Z. Post-translationally, C-terminally processed by CTPA; processing is essential to allow assembly of the oxygen-evolving complex and thus photosynthetic growth.

It is found in the plastid. Its subcellular location is the chloroplast thylakoid membrane. The enzyme catalyses 2 a plastoquinone + 4 hnu + 2 H2O = 2 a plastoquinol + O2. Its function is as follows. Photosystem II (PSII) is a light-driven water:plastoquinone oxidoreductase that uses light energy to abstract electrons from H(2)O, generating O(2) and a proton gradient subsequently used for ATP formation. It consists of a core antenna complex that captures photons, and an electron transfer chain that converts photonic excitation into a charge separation. The D1/D2 (PsbA/PsbD) reaction center heterodimer binds P680, the primary electron donor of PSII as well as several subsequent electron acceptors. The protein is Photosystem II protein D1 of Trieres chinensis (Marine centric diatom).